The sequence spans 146 residues: Large ribosomal subunit protein uL15 (146 aa).

Over residues 1–13 (MKLHELKPAEGSR) the composition is skewed to basic and acidic residues. The tract at residues 1–51 (MKLHELKPAEGSRKVRNRVGRGTSSGNGKTSGRGQKGQKARSGGGVRLGFE) is disordered. Gly residues-rich tracts occupy residues 23–35 (TSSG…GRGQ) and 42–51 (SGGGVRLGFE).

It belongs to the universal ribosomal protein uL15 family. Part of the 50S ribosomal subunit.

Functionally, binds to the 23S rRNA. The sequence is that of Large ribosomal subunit protein uL15 from Streptococcus pneumoniae serotype 2 (strain D39 / NCTC 7466).